Consider the following 2211-residue polypeptide: Activating signal cointegrator 1 complex subunit 3 (2211 aa).

Residues 495–678 (ETAYNTNENM…FLHVNPYIGL (184 aa)) form the Helicase ATP-binding 1 domain. 508–515 (APTGAGKT) lines the ATP pocket. The DEVH box signature appears at 620-623 (DEVH). The Helicase C-terminal 1 domain maps to 717–923 (VLKQIMAGHQ…GTVTNVEEAV (207 aa)). The 310-residue stretch at 987–1296 (STDLGRTASH…GAEAVCIINF (310 aa)) folds into the SEC63 1 domain. Residues 1345 to 1520 (HTLYHTDCNV…WLNINQMGLF (176 aa)) enclose the Helicase ATP-binding 2 domain. An ATP-binding site is contributed by 1358–1365 (APTGSGKT). The DEIH box motif lies at 1462–1465 (DEIH). The 208-residue stretch at 1553–1760 (PAFQAIRSHS…GTITSKQDAM (208 aa)) folds into the Helicase C-terminal 2 domain. Positions 1821-2184 (PLTYGRIASY…YLGMDQQYDI (364 aa)) constitute an SEC63 2 domain.

This sequence belongs to the helicase family.

It localises to the nucleus. Its subcellular location is the nucleus speckle. The protein localises to the cytoplasm. The protein resides in the cytosol. The catalysed reaction is Couples ATP hydrolysis with the unwinding of duplex DNA by translocating in the 3'-5' direction.. It carries out the reaction ATP + H2O = ADP + phosphate + H(+). Its function is as follows. 3'-5' DNA helicase involved in repair of alkylated DNA. Promotes DNA unwinding to generate single-stranded substrate needed for ALKBH3, enabling ALKBH3 to process alkylated N3-methylcytosine (3mC) within double-stranded regions. Also involved in activation of the ribosome quality control (RQC) pathway, a pathway that degrades nascent peptide chains during problematic translation. Drives the splitting of stalled ribosomes. The chain is Activating signal cointegrator 1 complex subunit 3 (ascc3) from Gallus gallus (Chicken).